We begin with the raw amino-acid sequence, 114 residues long: uncharacterized protein (114 aa).

This is an uncharacterized protein from Archaeoglobus fulgidus (strain ATCC 49558 / DSM 4304 / JCM 9628 / NBRC 100126 / VC-16).